A 203-amino-acid chain; its full sequence is Large ribosomal subunit protein bL25 (203 aa).

It belongs to the bacterial ribosomal protein bL25 family. CTC subfamily. In terms of assembly, part of the 50S ribosomal subunit; part of the 5S rRNA/L5/L18/L25 subcomplex. Contacts the 5S rRNA. Binds to the 5S rRNA independently of L5 and L18.

This is one of the proteins that binds to the 5S RNA in the ribosome where it forms part of the central protuberance. The sequence is that of Large ribosomal subunit protein bL25 from Rickettsia peacockii (strain Rustic).